Here is a 517-residue protein sequence, read N- to C-terminus: GMP synthase [glutamine-hydrolyzing] (517 aa).

The Glutamine amidotransferase type-1 domain occupies 9–199; it reads RILILDFGSQ…VLNVCGCEGL (191 aa). The active-site Nucleophile is cysteine 86. Active-site residues include histidine 173 and glutamate 175. A GMPS ATP-PPase domain is found at 200 to 392; sequence WTSASIIEDA…LGLPYNMLYR (193 aa). Residue 227 to 233 coordinates ATP; that stretch reads SGGVDSS.

Homodimer.

The catalysed reaction is XMP + L-glutamine + ATP + H2O = GMP + L-glutamate + AMP + diphosphate + 2 H(+). Its pathway is purine metabolism; GMP biosynthesis; GMP from XMP (L-Gln route): step 1/1. In terms of biological role, catalyzes the synthesis of GMP from XMP. This chain is GMP synthase [glutamine-hydrolyzing], found in Aliivibrio fischeri (strain ATCC 700601 / ES114) (Vibrio fischeri).